The primary structure comprises 379 residues: Probable pectin lyase B (379 aa).

The N-terminal stretch at M1–A20 is a signal peptide. Disulfide bonds link C83–C102 and C92–C226. Residues N129 and N252 are each glycosylated (N-linked (GlcNAc...) asparagine). R256 is a catalytic residue. C323 and C331 are disulfide-bonded.

It belongs to the polysaccharide lyase 1 family.

The protein resides in the secreted. The enzyme catalyses Eliminative cleavage of (1-&gt;4)-alpha-D-galacturonan methyl ester to give oligosaccharides with 4-deoxy-6-O-methyl-alpha-D-galact-4-enuronosyl groups at their non-reducing ends.. Functionally, pectinolytic enzymes consist of four classes of enzymes: pectin lyase, polygalacturonase, pectin methylesterase and rhamnogalacturonase. Among pectinolytic enzymes, pectin lyase is the most important in depolymerization of pectin, since it cleaves internal glycosidic bonds of highly methylated pectins. The polypeptide is Probable pectin lyase B (pelB) (Aspergillus niger (strain ATCC MYA-4892 / CBS 513.88 / FGSC A1513)).